The chain runs to 456 residues: Cysteine synthase 2 (456 aa).

A helical transmembrane segment spans residues 9–29 (VYGTVALTAAFAAGILVTLGF).

It belongs to the cysteine synthase/cystathionine beta-synthase family. The cofactor is pyridoxal 5'-phosphate.

The protein localises to the mitochondrion outer membrane. The enzyme catalyses O-acetyl-L-serine + hydrogen sulfide = L-cysteine + acetate. Putative cysteine synthase that catalyzes the conversion of O-acetyl-L-serine (OAS) into cysteine, the last step in the cysteine biosynthesis pathway. However, in contrast to cysteine synthase cys-17, this CS-like protein may not function in cysteine biosynthesis. In Neurospora crassa (strain ATCC 24698 / 74-OR23-1A / CBS 708.71 / DSM 1257 / FGSC 987), this protein is Cysteine synthase 2.